The chain runs to 333 residues: Flap endonuclease 1 (333 aa).

The tract at residues 1–99 (MGVALREVLT…ETIESRREVR (99 aa)) is N-domain. Residues aspartate 28, aspartate 81, glutamate 153, glutamate 155, aspartate 174, aspartate 176, and aspartate 235 each coordinate Mg(2+). Residues 117–256 (EAYKQARASS…TALKIVKKDG (140 aa)) are I-domain. Residues 325-333 (GQKTLDRWF) form an interaction with PCNA region.

Belongs to the XPG/RAD2 endonuclease family. FEN1 subfamily. In terms of assembly, interacts with PCNA. PCNA stimulates the nuclease activity without altering cleavage specificity. Requires Mg(2+) as cofactor.

Its function is as follows. Structure-specific nuclease with 5'-flap endonuclease and 5'-3' exonuclease activities involved in DNA replication and repair. During DNA replication, cleaves the 5'-overhanging flap structure that is generated by displacement synthesis when DNA polymerase encounters the 5'-end of a downstream Okazaki fragment. Binds the unpaired 3'-DNA end and kinks the DNA to facilitate 5' cleavage specificity. Cleaves one nucleotide into the double-stranded DNA from the junction in flap DNA, leaving a nick for ligation. Also involved in the base excision repair (BER) pathway. Acts as a genome stabilization factor that prevents flaps from equilibrating into structures that lead to duplications and deletions. Also possesses 5'-3' exonuclease activity on nicked or gapped double-stranded DNA. The sequence is that of Flap endonuclease 1 from Methanosphaerula palustris (strain ATCC BAA-1556 / DSM 19958 / E1-9c).